The chain runs to 246 residues: Nuclear transcription factor Y subunit C-2 (246 aa).

Disordered regions lie at residues 1–35 (MDNQ…AVPH) and 205–246 (QQGA…PSSE). The segment covering 9 to 21 (AGQPAAAGAGAPV) has biased composition (low complexity).

The protein belongs to the NFYC/HAP5 subunit family. Heterotrimeric transcription factor composed of three components, NF-YA, NF-YB and NF-YC. NF-YB and NF-YC must interact and dimerize for NF-YA association and DNA binding. Interacts with NFYB8, NFYB10 and HD5/NFYB11.

It is found in the nucleus. It localises to the cytoplasm. Its function is as follows. Probable transcription factor involved in the regulation of flowering time under long day (LD) conditions. Functions as a repressor of flowering, independently of HD1 and GHD7. Controls flowering time by negatively regulating the expression of EHD1 and HD3A. Component of the NF-Y/HAP transcription factor complex. This Oryza sativa subsp. japonica (Rice) protein is Nuclear transcription factor Y subunit C-2.